The primary structure comprises 239 residues: Isopentenyl-diphosphate Delta-isomerase (239 aa).

Substrate is bound at residue lysine 43. 2 residues coordinate Mg(2+): histidine 47 and histidine 58. The region spanning 56–210 (LLHRAFSIFL…KVKVTPWFRL (155 aa)) is the Nudix hydrolase domain. Substrate is bound by residues arginine 77 and lysine 81. Cysteine 93 is an active-site residue. Substrate is bound at residue serine 94. Residues glutamate 156 and glutamate 158 each coordinate Mg(2+). Residue glutamate 158 is part of the active site.

Belongs to the IPP isomerase type 1 family. Mg(2+) serves as cofactor.

It carries out the reaction isopentenyl diphosphate = dimethylallyl diphosphate. It functions in the pathway isoprenoid biosynthesis; dimethylallyl diphosphate biosynthesis; dimethylallyl diphosphate from isopentenyl diphosphate: step 1/1. Functionally, catalyzes the 1,3-allylic rearrangement of the homoallylic substrate isopentenyl (IPP) to its highly electrophilic allylic isomer, dimethylallyl diphosphate (DMAPP). This chain is Isopentenyl-diphosphate Delta-isomerase (ipi), found in Dictyostelium discoideum (Social amoeba).